The chain runs to 254 residues: Phosphatidylglycerol--prolipoprotein diacylglyceryl transferase (254 aa).

A run of 3 helical transmembrane segments spans residues 11-31 (LAIR…LLLA), 49-69 (FLIA…IFEF), and 84-104 (QGGL…YIYL). Residue R130 coordinates a 1,2-diacyl-sn-glycero-3-phospho-(1'-sn-glycerol). A run of 3 helical transmembrane segments spans residues 169 to 189 (PTFL…VYLL), 196 to 216 (GIVF…IEGL), and 228 to 248 (VAQL…YNII).

This sequence belongs to the Lgt family.

It localises to the cell membrane. It catalyses the reaction L-cysteinyl-[prolipoprotein] + a 1,2-diacyl-sn-glycero-3-phospho-(1'-sn-glycerol) = an S-1,2-diacyl-sn-glyceryl-L-cysteinyl-[prolipoprotein] + sn-glycerol 1-phosphate + H(+). It functions in the pathway protein modification; lipoprotein biosynthesis (diacylglyceryl transfer). Functionally, catalyzes the transfer of the diacylglyceryl group from phosphatidylglycerol to the sulfhydryl group of the N-terminal cysteine of a prolipoprotein, the first step in the formation of mature lipoproteins. This chain is Phosphatidylglycerol--prolipoprotein diacylglyceryl transferase, found in Clostridium botulinum (strain Loch Maree / Type A3).